The following is a 297-amino-acid chain: 2-dehydropantoate 2-reductase (297 aa).

Residues 11–16 (GAGAMG), asparagine 107, and alanine 133 each bind NADP(+). Asparagine 107 contributes to the substrate binding site. Residue lysine 187 is the Proton donor of the active site. 4 residues coordinate substrate: asparagine 191, asparagine 195, asparagine 205, and serine 251. Glutamate 263 contributes to the NADP(+) binding site.

It belongs to the ketopantoate reductase family.

The protein localises to the cytoplasm. It carries out the reaction (R)-pantoate + NADP(+) = 2-dehydropantoate + NADPH + H(+). The protein operates within cofactor biosynthesis; (R)-pantothenate biosynthesis; (R)-pantoate from 3-methyl-2-oxobutanoate: step 2/2. Catalyzes the NADPH-dependent reduction of ketopantoate into pantoic acid. The chain is 2-dehydropantoate 2-reductase from Listeria monocytogenes serovar 1/2a (strain ATCC BAA-679 / EGD-e).